A 252-amino-acid polypeptide reads, in one-letter code: Demethylmenaquinone methyltransferase (252 aa).

Residues Thr64, Asp85, and 112–113 (NA) contribute to the S-adenosyl-L-methionine site.

This sequence belongs to the class I-like SAM-binding methyltransferase superfamily. MenG/UbiE family.

It carries out the reaction a 2-demethylmenaquinol + S-adenosyl-L-methionine = a menaquinol + S-adenosyl-L-homocysteine + H(+). Its pathway is quinol/quinone metabolism; menaquinone biosynthesis; menaquinol from 1,4-dihydroxy-2-naphthoate: step 2/2. Its function is as follows. Methyltransferase required for the conversion of demethylmenaquinol (DMKH2) to menaquinol (MKH2). The protein is Demethylmenaquinone methyltransferase of Lactococcus lactis subsp. lactis (strain IL1403) (Streptococcus lactis).